Here is a 475-residue protein sequence, read N- to C-terminus: 3-isopropylmalate dehydratase large subunit 1 (475 aa).

[4Fe-4S] cluster is bound by residues cysteine 353, cysteine 413, and cysteine 416.

It belongs to the aconitase/IPM isomerase family. LeuC type 1 subfamily. As to quaternary structure, heterodimer of LeuC and LeuD. Requires [4Fe-4S] cluster as cofactor.

The enzyme catalyses (2R,3S)-3-isopropylmalate = (2S)-2-isopropylmalate. It participates in amino-acid biosynthesis; L-leucine biosynthesis; L-leucine from 3-methyl-2-oxobutanoate: step 2/4. In terms of biological role, catalyzes the isomerization between 2-isopropylmalate and 3-isopropylmalate, via the formation of 2-isopropylmaleate. This chain is 3-isopropylmalate dehydratase large subunit 1, found in Mannheimia succiniciproducens (strain KCTC 0769BP / MBEL55E).